Here is a 310-residue protein sequence, read N- to C-terminus: p-hydroxybenzoic acid efflux pump subunit AaeA (310 aa).

Residues 12-32 (AITVVLVVLAFIAIFRAWSFY) traverse the membrane as a helical segment.

Belongs to the membrane fusion protein (MFP) (TC 8.A.1) family.

The protein localises to the cell inner membrane. Functionally, forms an efflux pump with AaeB. The sequence is that of p-hydroxybenzoic acid efflux pump subunit AaeA from Cronobacter sakazakii (strain ATCC BAA-894) (Enterobacter sakazakii).